Reading from the N-terminus, the 458-residue chain is Exodeoxyribonuclease 7 large subunit (458 aa).

It belongs to the XseA family. Heterooligomer composed of large and small subunits.

It localises to the cytoplasm. The enzyme catalyses Exonucleolytic cleavage in either 5'- to 3'- or 3'- to 5'-direction to yield nucleoside 5'-phosphates.. Its function is as follows. Bidirectionally degrades single-stranded DNA into large acid-insoluble oligonucleotides, which are then degraded further into small acid-soluble oligonucleotides. The polypeptide is Exodeoxyribonuclease 7 large subunit (Shouchella clausii (strain KSM-K16) (Alkalihalobacillus clausii)).